The following is a 491-amino-acid chain: E3 ubiquitin-protein ligase Hakai (491 aa).

2 disordered regions span residues 1-20 and 33-61; these read MDHT…LGGL and KQAS…GDEE. Residues 109 to 149 form an RING-type zinc finger; the sequence is CDKCGLPIKVYGRMIPCKHVFCYDCAILHEKKGDKMCPGCS. The HYB domain stretch occupies residues 148-206; sequence CSDPVQRIEQCTRGSLFMCSIVQGCKRTYLSQRDLQAHINHRHMRAGKPVTRASLENVH. The segment at 164-190 adopts a C2H2-type zinc-finger fold; it reads FMCSIVQGCKRTYLSQRDLQAHINHRH. Phosphoserine is present on residues Ser201, Ser285, and Ser290. Positions 255 to 491 are disordered; it reads QPHEDIRAPP…DQTRYRPYYQ (237 aa). 3 stretches are compositionally biased toward pro residues: residues 342–359, 372–389, and 399–423; these read APPP…PHPP, APPP…PPPG, and MNHP…PPHH. Over residues 427-442 the composition is skewed to polar residues; it reads NSLPQFTEDQGTLSPP. Residues 457 to 478 show a composition bias toward pro residues; that stretch reads PRGPPPPPRMQGPPSQTPLPGP.

Belongs to the Hakai family. As to quaternary structure, homodimer. Interacts with tyrosine-phosphorylated SRC substrates. Component of the WMM complex, a N6-methyltransferase complex composed of a catalytic subcomplex, named MAC, and of an associated subcomplex, named MACOM. The MAC subcomplex is composed of METTL3 and METTL14. The MACOM subcomplex is composed of WTAP, ZC3H13, CBLL1/HAKAI, VIRMA, and, in some cases of RBM15 (RBM15 or RBM15B). Also a component of a MACOM-like complex, named WTAP complex, composed of WTAP, ZC3H13, CBLL1, VIRMA, RBM15, BCLAF1 and THRAP3. In terms of processing, phosphorylated on tyrosine residues. In terms of tissue distribution, detected in heart, brain, spleen, lung, liver, skeletal muscle, kidney and testis.

It is found in the nucleus speckle. It localises to the nucleus. The protein localises to the nucleoplasm. The protein resides in the cytoplasm. The enzyme catalyses S-ubiquitinyl-[E2 ubiquitin-conjugating enzyme]-L-cysteine + [acceptor protein]-L-lysine = [E2 ubiquitin-conjugating enzyme]-L-cysteine + N(6)-ubiquitinyl-[acceptor protein]-L-lysine.. It participates in protein modification; protein ubiquitination. Functionally, E3 ubiquitin-protein ligase that mediates ubiquitination of several tyrosine-phosphorylated Src substrates, including CDH1, CTTN and DOK1. Targets CDH1 for endocytosis and degradation. Associated component of the WMM complex, a complex that mediates N6-methyladenosine (m6A) methylation of RNAs, a modification that plays a role in the efficiency of mRNA splicing and RNA processing. Its function in the WMM complex is unknown. The sequence is that of E3 ubiquitin-protein ligase Hakai from Mus musculus (Mouse).